The sequence spans 1029 residues: Sodium/potassium-transporting ATPase subunit alpha-4 (1029 aa).

Residues 1–37 (MGLWGKKGTVAPHDQSPRRRPKKGLIKKKMVKREKQK) are disordered. Residues 1-95 (MGLWGKKGTV…NTVTPPPTTP (95 aa)) are Cytoplasmic-facing. Basic residues predominate over residues 18-36 (RRRPKKGLIKKKMVKREKQ). Positions 90 to 92 (PPP) are interaction with phosphoinositide-3 kinase. A helical transmembrane segment spans residues 96–116 (EWVKFCKQLFGGFSLLLWTGA). Residues 117-139 (ILCFVAYSIQIYFNEEPTKDNLY) lie on the Extracellular side of the membrane. A helical transmembrane segment spans residues 140 to 160 (LSIVLSVVVIVTGCFSYYQEA). Residues 161–296 (KSSKIMESFK…VGQTPIAAEI (136 aa)) are Cytoplasmic-facing. Polar residues predominate over residues 223 to 237 (NSSLTGESEPQSRSP). The disordered stretch occupies residues 223 to 242 (NSSLTGESEPQSRSPDFTHE). A helical transmembrane segment spans residues 297-316 (EHFIHLITVVAVFLGVTFFA). The Extracellular portion of the chain corresponds to 317 to 328 (LSLLLGYGWLEA). A helical transmembrane segment spans residues 329-346 (IIFLIGIIVANVPEGLLA). At 347-778 (TVTVCLTLTA…EEGRLIFDNL (432 aa)) the chain is on the cytoplasmic side. D384 functions as the 4-aspartylphosphate intermediate in the catalytic mechanism. D723 and D727 together coordinate Mg(2+). The helical transmembrane segment at 779–798 (KKSIMYTLTSNIPEITPFLM) threads the bilayer. The Extracellular portion of the chain corresponds to 799 to 808 (FIILGIPLPL). A helical membrane pass occupies residues 809–829 (GTITILCIDLGTDMVPAISLA). Residues 830–849 (YESAESDIMKRLPRNPKTDN) are Cytoplasmic-facing. A helical transmembrane segment spans residues 850 to 872 (LVNHRLIGMAYGQIGMIQALAGF). Topologically, residues 873–924 (FTYFVILAENGFRPVDLLGIRLHWEDKYLNDLEDSYGQQWTYEQRKVVEFTC) are extracellular. The chain crosses the membrane as a helical span at residues 925 to 944 (QTAFFVTIVVVQWADLIISK). Residues 945-957 (TRRNSLFQQGMRN) lie on the Cytoplasmic side of the membrane. Phosphoserine; by PKA is present on S949. Residues 958 to 976 (KVLIFGILEETLLAAFLSY) traverse the membrane as a helical segment. At 977-991 (TPGMDVALRMYPLKI) the chain is on the extracellular side. Residues 992-1012 (TWWLCAIPYSILIFVYDEIRK) traverse the membrane as a helical segment. The Cytoplasmic segment spans residues 1013-1029 (LLIRQHPDGWVERETYY).

It belongs to the cation transport ATPase (P-type) (TC 3.A.3) family. Type IIC subfamily. In terms of assembly, the sodium/potassium-transporting ATPase is composed of a catalytic alpha subunit, an auxiliary non-catalytic beta subunit and an additional regulatory subunit. As to expression, specifically expressed in testis. Found in very low levels in skeletal muscle. Expressed in mature sperm (at protein level).

It is found in the cell membrane. The catalysed reaction is K(+)(out) + Na(+)(in) + ATP + H2O = K(+)(in) + Na(+)(out) + ADP + phosphate + H(+). Specifically inhibited by an endogenous cardiac glycoside, ouabain. Its function is as follows. This is the catalytic component of the active enzyme, which catalyzes the hydrolysis of ATP coupled with the exchange of sodium and potassium ions across the plasma membrane. This action creates the electrochemical gradient of sodium and potassium ions, providing the energy for active transport of various nutrients. Plays a role in sperm motility. The sequence is that of Sodium/potassium-transporting ATPase subunit alpha-4 from Homo sapiens (Human).